A 465-amino-acid chain; its full sequence is MTPVRMQHSLAGQTYAVPLIQPDLRREEAVQQMADALQYLQKVSGDIFSRISQQVEQSRSQVQAIGEKVSLAQAKIEKIKGSKKAIKVFSSAKYPAPERLQEYGSIFTGAQDPGLQRRPRHRIQSKHRPLDERALQEKLKDFPVCVSTKPEPEDDAEEGLGGLPSNISSVSSLLLFNTTENLYKKYVFLDPLAGAVTKTHVMLGAETEEKLFDAPLSISKREQLEQQVPENYFYVPDLGQVPEIDVPSYLPDLPGIANDLMYIADLGPGIAPSAPGTIPELPTFHTEVAEPLKVDLQDGVLTPPPPPPPPPPAPEVLASAPPLPPSTAAPVGQGARQDDSSSSASPSVQGAPREVVDPSGGRATLLESIRQAGGIGKAKLRSMKERKLEKKKQKEQEQVRATSQGGHLMSDLFNKLVMRRKGISGKGPGAGEGPGGAFARVSDSIPPLPPPQQPQAEEDEDDWES.

The interval 1-54 is required for WASH complex assembly; sequence MTPVRMQHSLAGQTYAVPLIQPDLRREEAVQQMADALQYLQKVSGDIFSRISQQ. Residues 1–167 are WHD1; the sequence is MTPVRMQHSL…EGLGGLPSNI (167 aa). Lys220 participates in a covalent cross-link: Glycyl lysine isopeptide (Lys-Gly) (interchain with G-Cter in ubiquitin). 2 disordered regions span residues 297–407 and 422–465; these read QDGV…QGGH and GISG…DWES. Positions 302-314 are enriched in pro residues; it reads TPPPPPPPPPPAP. Positions 349–465 are VCA; it reads QGAPREVVDP…AEEDEDDWES (117 aa). The WH2 domain maps to 361-383; that stretch reads GRATLLESIRQAGGIGKAKLRSM. Basic and acidic residues predominate over residues 382–398; the sequence is SMKERKLEKKKQKEQEQ. Over residues 424–436 the composition is skewed to gly residues; that stretch reads SGKGPGAGEGPGG. Acidic residues predominate over residues 456-465; it reads AEEDEDDWES.

This sequence belongs to the WASH1 family. As to quaternary structure, component of the WASH core complex also described as WASH regulatory complex (SHRC) composed of WASH (WASHC1, WASH2P or WASH3P), WASHC2 (WASHC2A or WASHC2C), WASHC3, WASHC4 and WASHC5. The WASH core complex associates with the F-actin-capping protein dimer (formed by CAPZA1, CAPZA2 or CAPZA3 and CAPZB) in a transient or substoichiometric manner which was initially described as WASH complex. Interacts (via WHD1 region) with WASHC2C; the interaction is direct. Interacts with alpha-tubulin. Interacts with BECN1; WASHC1 and AMBRA1 can competitively interact with BECN1. Interacts with BLOC1S2; may associate with the BLOC-1 complex. Interacts with tubulin gamma chain (TUBG1 or TUBG2). Interacts with EXOC1, EXOC4, EXOC8; in MMP14-positive endosomes in breast tumor cells; indicative for an association with the exocyst complex.

It localises to the early endosome membrane. The protein localises to the recycling endosome membrane. Its subcellular location is the late endosome. The protein resides in the cytoplasmic vesicle. It is found in the autophagosome. It localises to the cytoplasm. The protein localises to the cytoskeleton. Its subcellular location is the microtubule organizing center. The protein resides in the centrosome. It is found in the centriole. Its function is as follows. Acts as a nucleation-promoting factor at the surface of endosomes, where it recruits and activates the Arp2/3 complex to induce actin polymerization, playing a key role in the fission of tubules that serve as transport intermediates during endosome sorting. Involved in endocytic trafficking of EGF. Involved in transferrin receptor recycling. Regulates the trafficking of endosomal alpha5beta1 integrin to the plasma membrane and involved in invasive cell migration. In T-cells involved in endosome-to-membrane recycling of receptors including T-cell receptor (TCR), CD28 and ITGAL; proposed to be implicated in T-cell proliferation and effector function. In dendritic cells involved in endosome-to-membrane recycling of major histocompatibility complex (MHC) class II probably involving retromer and subsequently allowing antigen sampling, loading and presentation during T-cell activation. Involved in Arp2/3 complex-dependent actin assembly driving Salmonella typhimurium invasion independent of ruffling. Involved in the exocytosis of MMP14 leading to matrix remodeling during invasive migration and implicating late endosome-to-plasma membrane tubular connections and cooperation with the exocyst complex. Involved in negative regulation of autophagy independently from its role in endosomal sorting by inhibiting BECN1 ubiquitination to inactivate PIK3C3/Vps34 activity. In Homo sapiens (Human), this protein is WAS protein family homolog 2 (WASH2P).